The chain runs to 150 residues: Actin-related protein 2/3 complex subunit 5-C (150 aa).

Residues 21-45 (NKFVDEEEAGEGQQGPDEGEVDSAI) form a disordered region.

This sequence belongs to the ARPC5 family. As to quaternary structure, component of the Arp2/3 complex composed of actr2/arp2, actr3/arp3, arpc1 (arpc1a or arpc1b), arpc2, arpc3, arpc4 and arpc5.

The protein localises to the cytoplasm. It localises to the cytoskeleton. The protein resides in the cell projection. Its subcellular location is the nucleus. Its function is as follows. Component of the Arp2/3 complex, a multiprotein complex that mediates actin polymerization upon stimulation by nucleation-promoting factor (NPF). The Arp2/3 complex mediates the formation of branched actin networks in the cytoplasm, providing the force for cell motility. In addition to its role in the cytoplasmic cytoskeleton, the Arp2/3 complex also promotes actin polymerization in the nucleus, thereby regulating gene transcription and repair of damaged DNA. The Arp2/3 complex promotes homologous recombination (HR) repair in response to DNA damage by promoting nuclear actin polymerization, leading to drive motility of double-strand breaks (DSBs). This is Actin-related protein 2/3 complex subunit 5-C (arpc5-c) from Xenopus laevis (African clawed frog).